Here is a 520-residue protein sequence, read N- to C-terminus: 2-isopropylmalate synthase (520 aa).

The region spanning 12–274 (VVIFDTTLRD…WCNVESTMLT (263 aa)) is the Pyruvate carboxyltransferase domain. The Mn(2+) site is built by Asp21, His209, His211, and Asn245. A regulatory domain region spans residues 398–520 (KLTSLTVIAG…RDVPSAAAAS (123 aa)).

This sequence belongs to the alpha-IPM synthase/homocitrate synthase family. LeuA type 1 subfamily. As to quaternary structure, homodimer. It depends on Mn(2+) as a cofactor.

It is found in the cytoplasm. The catalysed reaction is 3-methyl-2-oxobutanoate + acetyl-CoA + H2O = (2S)-2-isopropylmalate + CoA + H(+). The protein operates within amino-acid biosynthesis; L-leucine biosynthesis; L-leucine from 3-methyl-2-oxobutanoate: step 1/4. Catalyzes the condensation of the acetyl group of acetyl-CoA with 3-methyl-2-oxobutanoate (2-ketoisovalerate) to form 3-carboxy-3-hydroxy-4-methylpentanoate (2-isopropylmalate). The sequence is that of 2-isopropylmalate synthase from Nitrobacter hamburgensis (strain DSM 10229 / NCIMB 13809 / X14).